We begin with the raw amino-acid sequence, 402 residues long: ORC1-type DNA replication protein 17 (402 aa).

Positions 223 and 235 each coordinate ATP.

The protein belongs to the CDC6/cdc18 family.

In terms of biological role, involved in regulation of DNA replication. This Haloarcula marismortui (strain ATCC 43049 / DSM 3752 / JCM 8966 / VKM B-1809) (Halobacterium marismortui) protein is ORC1-type DNA replication protein 17 (cdc6q).